A 76-amino-acid chain; its full sequence is UPF0291 protein BCE_1981 (76 aa).

It belongs to the UPF0291 family.

Its subcellular location is the cytoplasm. This is UPF0291 protein BCE_1981 from Bacillus cereus (strain ATCC 10987 / NRS 248).